The chain runs to 160 residues: Flavodoxin (160 aa).

Residues 3 to 153 (ISILYSSKTG…NARIFGERIA (151 aa)) enclose the Flavodoxin-like domain.

It belongs to the flavodoxin family. FMN serves as cofactor.

In terms of biological role, low-potential electron donor to a number of redox enzymes. In Clostridium saccharobutylicum, this protein is Flavodoxin (floX).